The sequence spans 196 residues: GTP cyclohydrolase 1 (196 aa).

Zn(2+)-binding residues include cysteine 86, histidine 89, and cysteine 158.

This sequence belongs to the GTP cyclohydrolase I family. In terms of assembly, homomer.

The catalysed reaction is GTP + H2O = 7,8-dihydroneopterin 3'-triphosphate + formate + H(+). The protein operates within cofactor biosynthesis; 7,8-dihydroneopterin triphosphate biosynthesis; 7,8-dihydroneopterin triphosphate from GTP: step 1/1. This is GTP cyclohydrolase 1 from Clostridium botulinum (strain Kyoto / Type A2).